The sequence spans 231 residues: Homeobox protein engrailed-1a (231 aa).

3 disordered regions span residues 1 to 29 (MEDQ…AHRN), 43 to 105 (GCKR…KDSQ), and 121 to 148 (DRPS…RPRT). A compositionally biased stretch (basic and acidic residues) spans 43 to 56 (GCKRERERVTRDSG). Residues 68-102 (DGVSSSASSTVSSPVSSRQSNKVEQGSSKSSSPSK) show a composition bias toward low complexity. Positions 143 to 202 (DKRPRTAFTAEQLQRLKAEFQTSRYITEQRRQALARELGLNESQIKIWFQNKRAKIKKSS) form a DNA-binding region, homeobox.

The protein belongs to the engrailed homeobox family.

It localises to the nucleus. This Danio rerio (Zebrafish) protein is Homeobox protein engrailed-1a (eng1a).